We begin with the raw amino-acid sequence, 209 residues long: N-(5'-phosphoribosyl)anthranilate isomerase (209 aa).

It belongs to the TrpF family.

The enzyme catalyses N-(5-phospho-beta-D-ribosyl)anthranilate = 1-(2-carboxyphenylamino)-1-deoxy-D-ribulose 5-phosphate. The protein operates within amino-acid biosynthesis; L-tryptophan biosynthesis; L-tryptophan from chorismate: step 3/5. The polypeptide is N-(5'-phosphoribosyl)anthranilate isomerase (Staphylococcus carnosus (strain TM300)).